The primary structure comprises 459 residues: Cytosolic carboxypeptidase 6 (459 aa).

The Peptidase M14 domain occupies 142 to 418; sequence IPYTYGQMQI…AFCRALLNFY (277 aa). Residues H204, E207, and H302 each coordinate Zn(2+). E376 acts as the Proton donor/acceptor in catalysis.

It belongs to the peptidase M14 family. Zn(2+) serves as cofactor. In terms of tissue distribution, expressed in labial and amphid neurons.

The protein resides in the cytoplasm. The enzyme catalyses (L-glutamyl)(n+1)-gamma-L-glutamyl-L-glutamyl-[protein] + H2O = (L-glutamyl)(n)-gamma-L-glutamyl-L-glutamyl-[protein] + L-glutamate. Its function is as follows. Metallocarboxypeptidase that catalyzes the removing of polyglutamate side chains that are present on the gamma-carboxyl group of glutamate residues of tubulin in sensory cilia. Probably via the deglutamylation of tubulin, promotes microtubule stability required for axon regrowth after injury. Also regulates microtubule dynamics in uterine muscle cells. This Caenorhabditis elegans protein is Cytosolic carboxypeptidase 6.